A 724-amino-acid chain; its full sequence is Pesticidal crystal protein Cry11Ba (724 aa).

The protein belongs to the delta endotoxin family.

Its function is as follows. Promotes colloidosmotic lysis by binding to the midgut epithelial cells of mosquitos. Active on Aedes aegypti, Culex pipiens and Anopheles stephensi larvae. This Bacillus thuringiensis subsp. jegathesan protein is Pesticidal crystal protein Cry11Ba (cry11Ba).